The chain runs to 882 residues: DNA polymerase 1 (882 aa).

A disordered region spans residues 1 to 31 (MTKQLTLFDIPSSKPAKSEQNTQQSQQSAPV). Residues 18–29 (SEQNTQQSQQSA) are compositionally biased toward polar residues.

This sequence belongs to the DNA polymerase type-B family. As to quaternary structure, interacts with PCNA subunit PCNA2 and weakly with PCNA3.

The enzyme catalyses DNA(n) + a 2'-deoxyribonucleoside 5'-triphosphate = DNA(n+1) + diphosphate. With respect to regulation, DNA synthesis is stimulated by PCNA heterotrimers. Its function is as follows. This polymerase possesses two enzymatic activities: DNA synthesis (polymerase) and an exonucleolytic activity that degrades single-stranded DNA in the 3'- to 5'-direction. DNA polymerase I, DNA ligase and the flap endonuclease may be constitutively associated with the PCNA heterotrimer forming a scanning complex able to couple DNA synthesis and Okazaki fragment maturation. In Saccharolobus solfataricus (strain ATCC 35092 / DSM 1617 / JCM 11322 / P2) (Sulfolobus solfataricus), this protein is DNA polymerase 1 (dpo1).